Here is a 916-residue protein sequence, read N- to C-terminus: Protein translocase subunit SecA (916 aa).

ATP-binding positions include Gln-87, 105–109, and Asp-507; that span reads GEGKT. 4 residues coordinate Zn(2+): Cys-900, Cys-902, Cys-911, and His-912.

It belongs to the SecA family. In terms of assembly, monomer and homodimer. Part of the essential Sec protein translocation apparatus which comprises SecA, SecYEG and auxiliary proteins SecDF-YajC and YidC. Zn(2+) serves as cofactor.

It localises to the cell inner membrane. Its subcellular location is the cytoplasm. The catalysed reaction is ATP + H2O + cellular proteinSide 1 = ADP + phosphate + cellular proteinSide 2.. In terms of biological role, part of the Sec protein translocase complex. Interacts with the SecYEG preprotein conducting channel. Has a central role in coupling the hydrolysis of ATP to the transfer of proteins into and across the cell membrane, serving both as a receptor for the preprotein-SecB complex and as an ATP-driven molecular motor driving the stepwise translocation of polypeptide chains across the membrane. This chain is Protein translocase subunit SecA, found in Neisseria meningitidis serogroup A / serotype 4A (strain DSM 15465 / Z2491).